A 314-amino-acid chain; its full sequence is WD repeat domain-containing protein 83 (314 aa).

7 WD repeats span residues 23–62 (CNQG…LLKT), 65–104 (GHGY…VVRK), 107–146 (GHAG…PDAI), 151–188 (EAKD…MCAD), 189–228 (YLGS…LLGE), 231–272 (GHQN…LVLK), and 275–313 (VGKA…EEGG).

It belongs to the WD repeat MORG1 family.

The protein localises to the cytoplasm. Functionally, molecular scaffold protein for various multimeric protein complexes. Acts as a module in the assembly of a multicomponent scaffold for the ERK pathway, linking ERK responses to specific agonists. Also involved in response to hypoxia by acting as a negative regulator of HIF1A/HIF-1-alpha. This chain is WD repeat domain-containing protein 83 (wdr83), found in Xenopus laevis (African clawed frog).